A 215-amino-acid chain; its full sequence is Peroxiredoxin 1 (215 aa).

One can recognise a Thioredoxin domain in the interval Val2–Val158. Cys46 functions as the Cysteine sulfenic acid (-SOH) intermediate in the catalytic mechanism. Arg121 is a substrate binding site.

This sequence belongs to the peroxiredoxin family. Prx6 subfamily. As to quaternary structure, homodecamer. Pentamer of dimers that assemble into a ring structure.

Its subcellular location is the cytoplasm. The catalysed reaction is a hydroperoxide + [thioredoxin]-dithiol = an alcohol + [thioredoxin]-disulfide + H2O. Thiol-specific peroxidase that catalyzes the reduction of hydrogen peroxide and organic hydroperoxides to water and alcohols, respectively. Plays a role in cell protection against oxidative stress by detoxifying peroxides. This chain is Peroxiredoxin 1, found in Sulfurisphaera tokodaii (strain DSM 16993 / JCM 10545 / NBRC 100140 / 7) (Sulfolobus tokodaii).